Here is a 235-residue protein sequence, read N- to C-terminus: MTAVRAVVTDIEGTTTPLAFVHEVLFPYARARLADFVAANADDEEVAAALGDARELGGIAGAGDAETLQLLLAWMDEDRKAGPLKLLQGLIWRHGYEEGVLKGEIYADAAAALRLWHGRGLRLFVYSSGSEAAQRLIFGHSDQGDLGPCFEGYFDTRIGAKVDSASYAAIAQSAGLPTREVLFLSDHEGEIKAAREAGMQAVTIDRTLQEEAWMEGPKAGSFSAVERALAPGKSA.

Belongs to the HAD-like hydrolase superfamily. MasA/MtnC family. As to quaternary structure, monomer. Mg(2+) serves as cofactor.

The enzyme catalyses 5-methylsulfanyl-2,3-dioxopentyl phosphate + H2O = 1,2-dihydroxy-5-(methylsulfanyl)pent-1-en-3-one + phosphate. It participates in amino-acid biosynthesis; L-methionine biosynthesis via salvage pathway; L-methionine from S-methyl-5-thio-alpha-D-ribose 1-phosphate: step 3/6. It functions in the pathway amino-acid biosynthesis; L-methionine biosynthesis via salvage pathway; L-methionine from S-methyl-5-thio-alpha-D-ribose 1-phosphate: step 4/6. Its function is as follows. Bifunctional enzyme that catalyzes the enolization of 2,3-diketo-5-methylthiopentyl-1-phosphate (DK-MTP-1-P) into the intermediate 2-hydroxy-3-keto-5-methylthiopentenyl-1-phosphate (HK-MTPenyl-1-P), which is then dephosphorylated to form the acireductone 1,2-dihydroxy-3-keto-5-methylthiopentene (DHK-MTPene). The protein is Enolase-phosphatase E1 of Parvibaculum lavamentivorans (strain DS-1 / DSM 13023 / NCIMB 13966).